Reading from the N-terminus, the 529-residue chain is BAR/IMD domain-containing adapter protein 2-like 2 (529 aa).

One can recognise an IMD domain in the interval 1-239 (MAPEMDQFYR…HSPGLLGPAL (239 aa)). 2 disordered regions span residues 221-327 (EASR…GGAR) and 403-510 (TSMS…TNPF). Ser231, Ser272, and Ser302 each carry phosphoserine. The segment covering 299–313 (SASSLYSGSAQSSRS) has biased composition (low complexity). Positions 324–387 (GGARRVRALV…PEAYVKALEE (64 aa)) constitute an SH3 domain. Composition is skewed to low complexity over residues 403–413 (TSMSPMTPMNP) and 452–462 (RSRTPSRVPSR). Over residues 463 to 472 (APSPAPPPLP) the composition is skewed to pro residues. A phosphoserine mark is found at Ser478 and Ser481.

In terms of tissue distribution, expressed in the epithelial layer of the intestine (at protein level).

Its subcellular location is the cell membrane. It localises to the cell junction. The protein localises to the cytoplasmic vesicle membrane. Its function is as follows. Phosphoinositides-binding protein that induces the formation of planar or gently curved membrane structures. Binds to phosphoinositides, including to phosphatidylinositol 4,5-bisphosphate (PtdIns(4,5)P2) headgroups. There seems to be no clear preference for a specific phosphoinositide. In Homo sapiens (Human), this protein is BAR/IMD domain-containing adapter protein 2-like 2 (BAIAP2L2).